The primary structure comprises 220 residues: Ribosomal RNA large subunit methyltransferase E (220 aa).

The segment covering 1–10 (MSRSGKDPGK) has biased composition (basic and acidic residues). The tract at residues 1–24 (MSRSGKDPGKRVKTARKRSASSTR) is disordered. S-adenosyl-L-methionine contacts are provided by G75, W77, D94, D110, and D134. The active-site Proton acceptor is the K174.

This sequence belongs to the class I-like SAM-binding methyltransferase superfamily. RNA methyltransferase RlmE family.

It localises to the cytoplasm. The enzyme catalyses uridine(2552) in 23S rRNA + S-adenosyl-L-methionine = 2'-O-methyluridine(2552) in 23S rRNA + S-adenosyl-L-homocysteine + H(+). Functionally, specifically methylates the uridine in position 2552 of 23S rRNA at the 2'-O position of the ribose in the fully assembled 50S ribosomal subunit. In Erythrobacter litoralis (strain HTCC2594), this protein is Ribosomal RNA large subunit methyltransferase E.